We begin with the raw amino-acid sequence, 29 residues long: Kalata-B4 (29 aa).

The segment at residues 1–29 is a cross-link (cyclopeptide (Gly-Asp)); sequence GLPVCGETCVGGTCNTPGCTCSWPVCTRD. Cystine bridges form between C5–C19, C9–C21, and C14–C26.

In terms of processing, this is a cyclic peptide.

Its function is as follows. Probably participates in a plant defense mechanism. This Oldenlandia affinis protein is Kalata-B4.